Consider the following 78-residue polypeptide: Sec-independent protein translocase protein TatA (78 aa).

A helical transmembrane segment spans residues 4-21 (SFQHILILLVVVLLLFGR). The segment at 49–78 (TAKSDSIKTIDNTGKPTNVQANPQRQDSTV) is disordered. Over residues 57–78 (TIDNTGKPTNVQANPQRQDSTV) the composition is skewed to polar residues.

It belongs to the TatA/E family. As to quaternary structure, the Tat system comprises two distinct complexes: a TatABC complex, containing multiple copies of TatA, TatB and TatC subunits, and a separate TatA complex, containing only TatA subunits. Substrates initially bind to the TatABC complex, which probably triggers association of the separate TatA complex to form the active translocon.

Its subcellular location is the cell inner membrane. Functionally, part of the twin-arginine translocation (Tat) system that transports large folded proteins containing a characteristic twin-arginine motif in their signal peptide across membranes. TatA could form the protein-conducting channel of the Tat system. This Afipia carboxidovorans (strain ATCC 49405 / DSM 1227 / KCTC 32145 / OM5) (Oligotropha carboxidovorans) protein is Sec-independent protein translocase protein TatA.